The sequence spans 556 residues: uncharacterized protein (556 aa).

A disordered region spans residues 69-129 (RRGHTSGHAS…SSARSSSTSG (61 aa)). Low complexity-rich tracts occupy residues 74–85 (SGHASEHTSSSR) and 93–129 (SMSS…STSG). Residues 379 to 399 (LGLYIFIGVLLGLIGVIGLFI) form a helical membrane-spanning segment. The RING-type; atypical zinc-finger motif lies at 498-541 (CTICLCEYSEESPLYRELPCHHIFHPACIDPYLLKNSDLCPLCK).

The protein localises to the vacuole membrane. It is found in the cell membrane. This is an uncharacterized protein from Schizosaccharomyces pombe (strain 972 / ATCC 24843) (Fission yeast).